The sequence spans 85 residues: Beta-toxin BmKAs1 (85 aa).

The signal sequence occupies residues 1–19; sequence MKIIIFLIVCSFVLIGVKA. Residues 20–82 form the LCN-type CS-alpha/beta domain; that stretch reads DNGYLLNKYT…LWAYETNKCN (63 aa). 4 cysteine pairs are disulfide-bonded: Cys31-Cys81, Cys35-Cys56, Cys42-Cys63, and Cys46-Cys65.

Belongs to the long (4 C-C) scorpion toxin superfamily. Sodium channel inhibitor family. In terms of processing, a possible sulfoxide Met-85 on BmP09 could explain the difference of function between BmK AS-1 and BmP09. As to expression, expressed by the venom gland.

It localises to the secreted. Functionally, beta toxins bind voltage-independently at site-4 of sodium channels (Nav) and shift the voltage of activation toward more negative potentials thereby affecting sodium channel activation and promoting spontaneous and repetitive firing. BmKAs1 also significantly stimulates the binding of [3H]-ryanodine to ryanodine receptors on the sarcoplasmic reticulum of the skeletal muscle. It also displays antinociceptive effect in rat models. Its function is as follows. Toxin BmP09 (which may be post-translationally modified) specifically and reversibly blocks large conductance calcium-dependent and voltage-dependent potassium channels (BK) but has no effect on sodium channels. In Olivierus martensii (Manchurian scorpion), this protein is Beta-toxin BmKAs1.